The chain runs to 371 residues: Transcription termination/antitermination protein NusA (371 aa).

One can recognise an S1 motif domain in the interval 135–199 (EDIMTGIVQR…KGPQIYVSRT (65 aa)). The KH domain occupies 301-367 (EKATTVIVPD…EPLFTEPETA (67 aa)). Residues 347–371 (GIYPRELEEDDEPLFTEPETAESDE) are disordered. The span at 353-371 (LEEDDEPLFTEPETAESDE) shows a compositional bias: acidic residues.

The protein belongs to the NusA family. In terms of assembly, monomer. Binds directly to the core enzyme of the DNA-dependent RNA polymerase and to nascent RNA.

It is found in the cytoplasm. Participates in both transcription termination and antitermination. This is Transcription termination/antitermination protein NusA from Bacillus subtilis (strain 168).